Consider the following 904-residue polypeptide: DNA mismatch repair protein MutS (904 aa).

638–645 contacts ATP; the sequence is GPNMAGKS. The segment at 825-869 is disordered; it reads KSKADGTRRPASYHEAQPLLPGMPEPPSTASAEPPQTVTPPEPPV.

Belongs to the DNA mismatch repair MutS family.

In terms of biological role, this protein is involved in the repair of mismatches in DNA. It is possible that it carries out the mismatch recognition step. This protein has a weak ATPase activity. This Oleidesulfovibrio alaskensis (strain ATCC BAA-1058 / DSM 17464 / G20) (Desulfovibrio alaskensis) protein is DNA mismatch repair protein MutS.